Consider the following 202-residue polypeptide: Thymidylate kinase (202 aa).

Residue 7–14 coordinates ATP; sequence GTEGVGKT.

Belongs to the thymidylate kinase family.

The enzyme catalyses dTMP + ATP = dTDP + ADP. Phosphorylation of dTMP to form dTDP in both de novo and salvage pathways of dTTP synthesis. This is Thymidylate kinase from Acinetobacter baylyi (strain ATCC 33305 / BD413 / ADP1).